A 700-amino-acid chain; its full sequence is Tectonic-2 (700 aa).

An N-terminal signal peptide occupies residues 1 to 25 (MGSLSPLSFLWGLLLLQGVLRPLRG). The Extracellular portion of the chain corresponds to 26–665 (DPVFIPPFIR…YYQGEPRPQC (640 aa)). Residues Asn76, Asn82, Asn146, Asn156, and Asn389 are each glycosylated (N-linked (GlcNAc...) asparagine). The chain crosses the membrane as a helical span at residues 666-682 (VAKGLMLLSLLMLAILL). The Cytoplasmic segment spans residues 683 to 700 (RHPWVGMCKAWSSASIQH).

This sequence belongs to the tectonic family. As to quaternary structure, part of the tectonic-like complex (also named B9 complex).

It localises to the membrane. It is found in the cytoplasm. Its subcellular location is the cytoskeleton. The protein resides in the cilium basal body. Component of the tectonic-like complex, a complex localized at the transition zone of primary cilia and acting as a barrier that prevents diffusion of transmembrane proteins between the cilia and plasma membranes. Required for hedgehog signaling transduction. The protein is Tectonic-2 (Tctn2) of Rattus norvegicus (Rat).